We begin with the raw amino-acid sequence, 204 residues long: Peroxynitrite isomerase (204 aa).

Positions 21–27 match the GXWXGXG motif; it reads GEWEGSG. Heme b is bound at residue histidine 195.

This sequence belongs to the nitrobindin family. As to quaternary structure, homodimer. The cofactor is heme b.

It catalyses the reaction peroxynitrite = nitrate. It functions in the pathway nitrogen metabolism. Functionally, heme-binding protein able to scavenge peroxynitrite and to protect free L-tyrosine against peroxynitrite-mediated nitration, by acting as a peroxynitrite isomerase that converts peroxynitrite to nitrate. Therefore, this protein likely plays a role in peroxynitrite sensing and in the detoxification of reactive nitrogen and oxygen species (RNS and ROS, respectively). Is able to bind nitric oxide (NO) in vitro, but may act as a sensor of peroxynitrite levels in vivo. This chain is Peroxynitrite isomerase, found in Arthrobacter sp. (strain FB24).